Consider the following 375-residue polypeptide: 23S rRNA (uracil(747)-C(5))-methyltransferase RlmC (375 aa).

Positions 3, 11, 14, and 87 each coordinate [4Fe-4S] cluster. The S-adenosyl-L-methionine site is built by Gln-212, Phe-241, Glu-262, and Asn-307. The active-site Nucleophile is the Cys-334.

It belongs to the class I-like SAM-binding methyltransferase superfamily. RNA M5U methyltransferase family. RlmC subfamily.

The enzyme catalyses uridine(747) in 23S rRNA + S-adenosyl-L-methionine = 5-methyluridine(747) in 23S rRNA + S-adenosyl-L-homocysteine + H(+). Catalyzes the formation of 5-methyl-uridine at position 747 (m5U747) in 23S rRNA. The chain is 23S rRNA (uracil(747)-C(5))-methyltransferase RlmC from Shigella flexneri serotype 5b (strain 8401).